The following is a 627-amino-acid chain: Serine/threonine-protein phosphatase 2A 56 kDa regulatory subunit delta 2 isoform (627 aa).

The disordered stretch occupies residues 1–37; it reads MKGLRSKFVKALSLKDEQGSHKNGHSKSHYISKNGSY.

It belongs to the phosphatase 2A regulatory subunit B family. In terms of assembly, PP2A consists of a common heterodimeric core enzyme, composed of a 36 kDa catalytic subunit (subunit C) and a 65 kDa constant regulatory subunit (PR65 or subunit A), that associates with a variety of regulatory subunits. Proteins that associate with the core dimer include three families of regulatory subunits B (the R2/B/PR55/B55, R3/B''/PR72/PR130/PR59 and R5/B'/B56 families), the 48 kDa variable regulatory subunit, viral proteins, and cell signaling molecules.

It is found in the cytoplasm. The protein localises to the cell tip. The B regulatory subunit might modulate substrate selectivity and catalytic activity, and might also direct the localization of the catalytic enzyme to a particular subcellular compartment. Has a role in cell shape control and septum formation. This Schizosaccharomyces pombe (strain 972 / ATCC 24843) (Fission yeast) protein is Serine/threonine-protein phosphatase 2A 56 kDa regulatory subunit delta 2 isoform (par2).